The chain runs to 394 residues: Elongation factor Tu (394 aa).

One can recognise a tr-type G domain in the interval 10-204 (KPHINIGTIG…AVDDNIPTPE (195 aa)). The interval 19 to 26 (GHVDHGKT) is G1. 19 to 26 (GHVDHGKT) lines the GTP pocket. T26 is a Mg(2+) binding site. The G2 stretch occupies residues 60–64 (GITIN). Residues 81-84 (DCPG) are G3. Residues 81–85 (DCPGH) and 136–139 (NKID) each bind GTP. Positions 136 to 139 (NKID) are G4. The tract at residues 174 to 176 (SAL) is G5.

It belongs to the TRAFAC class translation factor GTPase superfamily. Classic translation factor GTPase family. EF-Tu/EF-1A subfamily. As to quaternary structure, monomer.

Its subcellular location is the cytoplasm. The catalysed reaction is GTP + H2O = GDP + phosphate + H(+). GTP hydrolase that promotes the GTP-dependent binding of aminoacyl-tRNA to the A-site of ribosomes during protein biosynthesis. The polypeptide is Elongation factor Tu (Chlamydia caviae (strain ATCC VR-813 / DSM 19441 / 03DC25 / GPIC) (Chlamydophila caviae)).